Reading from the N-terminus, the 368-residue chain is Quinolinate synthase (368 aa).

Residues His-46 and Ser-63 each contribute to the iminosuccinate site. Cys-110 provides a ligand contact to [4Fe-4S] cluster. Residues 141–143 (YVN) and Ser-162 contribute to the iminosuccinate site. Cys-230 is a [4Fe-4S] cluster binding site. Residues 256–258 (HPE) and Thr-273 contribute to the iminosuccinate site. Residue Cys-320 coordinates [4Fe-4S] cluster.

It belongs to the quinolinate synthase family. Type 3 subfamily. The cofactor is [4Fe-4S] cluster.

Its subcellular location is the cytoplasm. The enzyme catalyses iminosuccinate + dihydroxyacetone phosphate = quinolinate + phosphate + 2 H2O + H(+). Its pathway is cofactor biosynthesis; NAD(+) biosynthesis; quinolinate from iminoaspartate: step 1/1. Catalyzes the condensation of iminoaspartate with dihydroxyacetone phosphate to form quinolinate. This is Quinolinate synthase from Bacillus mycoides (strain KBAB4) (Bacillus weihenstephanensis).